The sequence spans 198 residues: Large ribosomal subunit protein eL19 (198 aa).

2 disordered regions span residues 66 to 85 (YEEA…RGTA) and 150 to 177 (KRAK…EERQ). The segment covering 71–83 (RKGRHTGYGKRRG) has biased composition (basic residues). The segment covering 160 to 177 (QARRDKNKESRKRREERQ) has biased composition (basic and acidic residues).

The protein belongs to the eukaryotic ribosomal protein eL19 family.

The protein is Large ribosomal subunit protein eL19 (rpl-19) of Caenorhabditis elegans.